Here is a 203-residue protein sequence, read N- to C-terminus: Holliday junction branch migration complex subunit RuvA (203 aa).

A domain I region spans residues 1-64 (MFAYFRGRLT…EDAFLLYGFS (64 aa)). The domain II stretch occupies residues 65 to 143 (SESERQLFRL…KMSPDGGKTI (79 aa)). The flexible linker stretch occupies residues 144–150 (ASGSGGN). The domain III stretch occupies residues 151–203 (LALQIKDDALNALITLGFSKPAAQKAVTGILEGNPSLSVEEVVKSALVSIHNS).

This sequence belongs to the RuvA family. As to quaternary structure, homotetramer. Forms an RuvA(8)-RuvB(12)-Holliday junction (HJ) complex. HJ DNA is sandwiched between 2 RuvA tetramers; dsDNA enters through RuvA and exits via RuvB. An RuvB hexamer assembles on each DNA strand where it exits the tetramer. Each RuvB hexamer is contacted by two RuvA subunits (via domain III) on 2 adjacent RuvB subunits; this complex drives branch migration. In the full resolvosome a probable DNA-RuvA(4)-RuvB(12)-RuvC(2) complex forms which resolves the HJ.

It localises to the cytoplasm. The RuvA-RuvB-RuvC complex processes Holliday junction (HJ) DNA during genetic recombination and DNA repair, while the RuvA-RuvB complex plays an important role in the rescue of blocked DNA replication forks via replication fork reversal (RFR). RuvA specifically binds to HJ cruciform DNA, conferring on it an open structure. The RuvB hexamer acts as an ATP-dependent pump, pulling dsDNA into and through the RuvAB complex. HJ branch migration allows RuvC to scan DNA until it finds its consensus sequence, where it cleaves and resolves the cruciform DNA. The protein is Holliday junction branch migration complex subunit RuvA of Chlorobium limicola (strain DSM 245 / NBRC 103803 / 6330).